The following is a 138-amino-acid chain: MTTRYLLDKSAAYRAHLPAVRHRLEPLMERGLLARCGITDLEFGVSARSREDHRTLGTYRRDALEYVNTPDTVWVRAWEIQEALTDKGFHRSVKIPDLIIAAVAEHHGIPVMHYDQDFERIAAITRQPVEWVVAPGTA.

The PINc domain occupies 6–128 (LLDKSAAYRA…ERIAAITRQP (123 aa)). 2 residues coordinate Mg(2+): aspartate 8 and aspartate 97.

Belongs to the PINc/VapC protein family. Mg(2+) is required as a cofactor.

Toxic component of a type II toxin-antitoxin (TA) system. An RNase. Its toxic effect is neutralized by coexpression with cognate antitoxin VapB21. The polypeptide is Ribonuclease VapC21 (Mycobacterium tuberculosis (strain CDC 1551 / Oshkosh)).